The following is a 345-amino-acid chain: Dihydroorotate dehydrogenase (quinone) (345 aa).

FMN contacts are provided by residues 65–69 (AGLDK) and threonine 89. Lysine 69 is a binding site for substrate. Substrate is bound at residue 114–118 (NRMGF). FMN-binding residues include asparagine 142 and asparagine 175. Asparagine 175 is a binding site for substrate. Catalysis depends on serine 178, which acts as the Nucleophile. A substrate-binding site is contributed by asparagine 180. FMN is bound by residues lysine 220 and threonine 248. 249-250 (NT) is a binding site for substrate. FMN contacts are provided by residues glycine 271, glycine 300, and 321–322 (YT).

Belongs to the dihydroorotate dehydrogenase family. Type 2 subfamily. As to quaternary structure, monomer. FMN is required as a cofactor.

The protein resides in the cell membrane. It carries out the reaction (S)-dihydroorotate + a quinone = orotate + a quinol. It participates in pyrimidine metabolism; UMP biosynthesis via de novo pathway; orotate from (S)-dihydroorotate (quinone route): step 1/1. Its function is as follows. Catalyzes the conversion of dihydroorotate to orotate with quinone as electron acceptor. The polypeptide is Dihydroorotate dehydrogenase (quinone) (Burkholderia thailandensis (strain ATCC 700388 / DSM 13276 / CCUG 48851 / CIP 106301 / E264)).